We begin with the raw amino-acid sequence, 236 residues long: Mammalian ependymin-related protein 1 (236 aa).

The first 35 residues, 1–35, serve as a signal peptide directing secretion; sequence MPRRAPLRVARGSLDAWLLGGLWVCALGCLCGVGM. Cystine bridges form between Cys-54-Cys-184, Cys-100-Cys-234, and Cys-125-Cys-222. N-linked (GlcNAc...) asparagine glycans are attached at residues Asn-142 and Asn-194.

The protein belongs to the ependymin family. In terms of assembly, homodimer. Post-translationally, N-glycosylated; the glycan contains mannose-6-phosphate moieties.

The protein localises to the lysosome lumen. The protein resides in the secreted. Binds anionic lipids and gangliosides at acidic pH. The polypeptide is Mammalian ependymin-related protein 1 (EPDR1) (Bos taurus (Bovine)).